We begin with the raw amino-acid sequence, 253 residues long: Phycobilisome rod-core linker polypeptide CpcG4 (253 aa).

Positions 11-191 (SSQNHRVTSF…DFQEKAGTVQ (181 aa)) constitute a PBS-linker domain.

This sequence belongs to the phycobilisome linker protein family. In terms of assembly, part of the phycobilisome, a hemidiscoidal structure that is composed of two distinct substructures: a core complex and a number of rods radiating from the core.

It is found in the cellular thylakoid membrane. Rod-core linker protein required for attachment of phycocyanin to allophycocyanin in cores of phycobilisomes. Functionally, linker polypeptides determine the state of aggregation and the location of the disk-shaped phycobiliprotein units within the phycobilisome and modulate their spectroscopic properties in order to mediate a directed and optimal energy transfer. The sequence is that of Phycobilisome rod-core linker polypeptide CpcG4 from Nostoc sp. (strain PCC 7120 / SAG 25.82 / UTEX 2576).